A 291-amino-acid polypeptide reads, in one-letter code: MAVGKEILTKIRSVQNTQKITKAMQMVSTSKMRKTQERMSLARPYAEKVRMVMSHLAQTNTDHGIPLLESHREIRRVGFILITSDKGLCGGLNANVLKKFLAQVQEYRNQGIEEEIVCLGSKGLMACQSIGLNVVASAVNLGDTPKMEMLLGPLTELFQRYEKHEIDRIHLVYSGFVNTMRQEPRMEVLLPIGENVIGDSAPKSPFSWEYRYEPTALAVLEYLVRRYLESVVYQALSDNMASEQAARMVAMKAATDNAGNAIKELRLVYNKSRQAAITTELSEIVAGAAAV.

This sequence belongs to the ATPase gamma chain family. In terms of assembly, F-type ATPases have 2 components, CF(1) - the catalytic core - and CF(0) - the membrane proton channel. CF(1) has five subunits: alpha(3), beta(3), gamma(1), delta(1), epsilon(1). CF(0) has three main subunits: a, b and c.

The protein localises to the cell inner membrane. Functionally, produces ATP from ADP in the presence of a proton gradient across the membrane. The gamma chain is believed to be important in regulating ATPase activity and the flow of protons through the CF(0) complex. The protein is ATP synthase gamma chain of Neisseria gonorrhoeae (strain ATCC 700825 / FA 1090).